The sequence spans 491 residues: Acetyl-coenzyme A carboxylase carboxyl transferase subunit beta (491 aa).

One can recognise a CoA carboxyltransferase N-terminal domain in the interval 132-491 (LWNQCENCFI…ISELLNLHAL (360 aa)). Residues Cys136, Cys139, Cys155, and Cys158 each coordinate Zn(2+). The C4-type zinc finger occupies 136 to 158 (CENCFIPNYKKVLKSNMQICEEC). Positions 252-262 (EKVEEWTKPDL) are enriched in basic and acidic residues. 2 disordered regions span residues 252–273 (EKVEEWTKPDLDEGEESQDEER) and 279–298 (DKGEESQEIEDSEANDEDDD). The segment covering 284–298 (SQEIEDSEANDEDDD) has biased composition (acidic residues).

Belongs to the AccD/PCCB family. As to quaternary structure, acetyl-CoA carboxylase is a heterohexamer composed of biotin carboxyl carrier protein, biotin carboxylase and 2 subunits each of ACCase subunit alpha and ACCase plastid-coded subunit beta (accD). Zn(2+) serves as cofactor.

The protein localises to the plastid. It carries out the reaction N(6)-carboxybiotinyl-L-lysyl-[protein] + acetyl-CoA = N(6)-biotinyl-L-lysyl-[protein] + malonyl-CoA. It functions in the pathway lipid metabolism; malonyl-CoA biosynthesis; malonyl-CoA from acetyl-CoA: step 1/1. Component of the acetyl coenzyme A carboxylase (ACC) complex. Biotin carboxylase (BC) catalyzes the carboxylation of biotin on its carrier protein (BCCP) and then the CO(2) group is transferred by the transcarboxylase to acetyl-CoA to form malonyl-CoA. The protein is Acetyl-coenzyme A carboxylase carboxyl transferase subunit beta of Cuscuta gronovii (Common dodder).